The sequence spans 634 residues: Glutamyl-tRNA(Gln) amidotransferase subunit E (634 aa).

The protein belongs to the GatB/GatE family. GatE subfamily. In terms of assembly, heterodimer of GatD and GatE.

It carries out the reaction L-glutamyl-tRNA(Gln) + L-glutamine + ATP + H2O = L-glutaminyl-tRNA(Gln) + L-glutamate + ADP + phosphate + H(+). Functionally, allows the formation of correctly charged Gln-tRNA(Gln) through the transamidation of misacylated Glu-tRNA(Gln) in organisms which lack glutaminyl-tRNA synthetase. The reaction takes place in the presence of glutamine and ATP through an activated gamma-phospho-Glu-tRNA(Gln). The GatDE system is specific for glutamate and does not act on aspartate. This is Glutamyl-tRNA(Gln) amidotransferase subunit E from Sulfolobus acidocaldarius (strain ATCC 33909 / DSM 639 / JCM 8929 / NBRC 15157 / NCIMB 11770).